Reading from the N-terminus, the 373-residue chain is MSEKKINLLDLDRKAMRALFADLGEKPFRADQLMKWIYHFGVSDFEEMTNINKVLRQKLAARCEIVAPEISSFQKSTDGTIKFAIHVGEGQEVETVYIPEDDRATLCVSSQVGCALECTFCSTAQQGFNRNLTVSEIVGQIWRVSHFLGFAKDTGDRPITNVVMMGMGEPLLNLANVIPAMDIMLDDFGFSLSKRRVTLSTSGVVPALDKLGDALDVALAVSIHAPNDELRDILVPVNKKYPLQEFLAGIRRYIAKSNANRGRVTVEYVMLDHINDSTEQAHELAKLMKDTPCKVNLIPFNPYPGSPYGRSSNSRIDRFSKVLMEYGLTVIVRKTRGDDIDAACGQLAGDIRDRTKRLAKKRMQENQISVTMN.

Glutamate 94 (proton acceptor) is an active-site residue. The region spanning 100–339 (EDDRATLCVS…VIVRKTRGDD (240 aa)) is the Radical SAM core domain. A disulfide bridge links cysteine 107 with cysteine 344. Residues cysteine 114, cysteine 118, and cysteine 121 each contribute to the [4Fe-4S] cluster site. Residues 168 to 169 (GE), serine 200, 222 to 224 (SIH), and asparagine 301 each bind S-adenosyl-L-methionine. Catalysis depends on cysteine 344, which acts as the S-methylcysteine intermediate.

Belongs to the radical SAM superfamily. RlmN family. The cofactor is [4Fe-4S] cluster.

It localises to the cytoplasm. The catalysed reaction is adenosine(2503) in 23S rRNA + 2 reduced [2Fe-2S]-[ferredoxin] + 2 S-adenosyl-L-methionine = 2-methyladenosine(2503) in 23S rRNA + 5'-deoxyadenosine + L-methionine + 2 oxidized [2Fe-2S]-[ferredoxin] + S-adenosyl-L-homocysteine. It catalyses the reaction adenosine(37) in tRNA + 2 reduced [2Fe-2S]-[ferredoxin] + 2 S-adenosyl-L-methionine = 2-methyladenosine(37) in tRNA + 5'-deoxyadenosine + L-methionine + 2 oxidized [2Fe-2S]-[ferredoxin] + S-adenosyl-L-homocysteine. Its function is as follows. Specifically methylates position 2 of adenine 2503 in 23S rRNA and position 2 of adenine 37 in tRNAs. m2A2503 modification seems to play a crucial role in the proofreading step occurring at the peptidyl transferase center and thus would serve to optimize ribosomal fidelity. This Shewanella sp. (strain W3-18-1) protein is Dual-specificity RNA methyltransferase RlmN.